The primary structure comprises 466 residues: 3-isopropylmalate dehydratase large subunit (466 aa).

Residues C347, C407, and C410 each coordinate [4Fe-4S] cluster.

The protein belongs to the aconitase/IPM isomerase family. LeuC type 1 subfamily. In terms of assembly, heterodimer of LeuC and LeuD. The cofactor is [4Fe-4S] cluster.

It catalyses the reaction (2R,3S)-3-isopropylmalate = (2S)-2-isopropylmalate. It functions in the pathway amino-acid biosynthesis; L-leucine biosynthesis; L-leucine from 3-methyl-2-oxobutanoate: step 2/4. In terms of biological role, catalyzes the isomerization between 2-isopropylmalate and 3-isopropylmalate, via the formation of 2-isopropylmaleate. In Shigella dysenteriae serotype 1 (strain Sd197), this protein is 3-isopropylmalate dehydratase large subunit.